We begin with the raw amino-acid sequence, 155 residues long: Aspartate carbamoyltransferase regulatory chain (155 aa).

Zn(2+)-binding residues include Cys110, Cys115, Cys139, and Cys142.

This sequence belongs to the PyrI family. Contains catalytic and regulatory chains. Requires Zn(2+) as cofactor.

Functionally, involved in allosteric regulation of aspartate carbamoyltransferase. This Yersinia pseudotuberculosis serotype IB (strain PB1/+) protein is Aspartate carbamoyltransferase regulatory chain.